Consider the following 248-residue polypeptide: 1-(5-phosphoribosyl)-5-[(5-phosphoribosylamino)methylideneamino] imidazole-4-carboxamide isomerase (248 aa).

The active-site Proton acceptor is aspartate 8. Aspartate 127 serves as the catalytic Proton donor.

It belongs to the HisA/HisF family.

It is found in the cytoplasm. It carries out the reaction 1-(5-phospho-beta-D-ribosyl)-5-[(5-phospho-beta-D-ribosylamino)methylideneamino]imidazole-4-carboxamide = 5-[(5-phospho-1-deoxy-D-ribulos-1-ylimino)methylamino]-1-(5-phospho-beta-D-ribosyl)imidazole-4-carboxamide. The protein operates within amino-acid biosynthesis; L-histidine biosynthesis; L-histidine from 5-phospho-alpha-D-ribose 1-diphosphate: step 4/9. This Thermotoga neapolitana (strain ATCC 49049 / DSM 4359 / NBRC 107923 / NS-E) protein is 1-(5-phosphoribosyl)-5-[(5-phosphoribosylamino)methylideneamino] imidazole-4-carboxamide isomerase.